The primary structure comprises 221 residues: Thyrotroph embryonic factor (221 aa).

The disordered stretch occupies residues E72–C116. Positions S73–S100 are enriched in low complexity. Residues D173 to D221 form the bZIP domain. The tract at residues K175–R195 is basic motif. The leucine-zipper stretch occupies residues L196 to I203.

This sequence belongs to the bZIP family. PAR subfamily. Binds DNA as a homodimer or a heterodimer. Can form a heterodimer with DBP.

Its subcellular location is the nucleus. Functionally, transcription factor that binds to and transactivates the TSHB promoter. Binds to a minimal DNA-binding sequence 5'-[TC][AG][AG]TTA[TC][AG]-3'. This chain is Thyrotroph embryonic factor (TEF), found in Phodopus sungorus (Striped hairy-footed hamster).